A 331-amino-acid polypeptide reads, in one-letter code: Phosphate acyltransferase (331 aa).

Belongs to the PlsX family. In terms of assembly, homodimer. Probably interacts with PlsY.

The protein localises to the cytoplasm. The enzyme catalyses a fatty acyl-[ACP] + phosphate = an acyl phosphate + holo-[ACP]. Its pathway is lipid metabolism; phospholipid metabolism. Functionally, catalyzes the reversible formation of acyl-phosphate (acyl-PO(4)) from acyl-[acyl-carrier-protein] (acyl-ACP). This enzyme utilizes acyl-ACP as fatty acyl donor, but not acyl-CoA. This is Phosphate acyltransferase from Lactococcus lactis subsp. lactis (strain IL1403) (Streptococcus lactis).